The sequence spans 250 residues: Endomucin (250 aa).

The signal sequence occupies residues 1 to 20 (MRLLQVTALFFLLSNSLCRG). 2 stretches are compositionally biased toward low complexity: residues 24 to 38 (KALT…SATT) and 45 to 60 (TNKS…TTNS). 2 disordered regions span residues 24–83 (KALT…ETTT) and 105–153 (NAVS…LTTA). N-linked (GlcNAc...) asparagine glycans are attached at residues asparagine 46, asparagine 115, and asparagine 119. Polar residues-rich tracts occupy residues 105 to 135 (NAVS…NQLP) and 143 to 153 (TETPSASLTTA). A helical membrane pass occupies residues 180–200 (VILPVVIALIVITVLVFTLVG). The interval 210–250 (PGTPESGNDQPQSDKESVKLLTVKTISHESGEHSAQGKAKN) is disordered. Serine 226 carries the phosphoserine modification.

In terms of processing, highly O-glycosylated. Sialic acid-rich glycoprotein.

It is found in the membrane. Endothelial sialomucin, also called endomucin or mucin-like sialoglycoprotein, which interferes with the assembly of focal adhesion complexes and inhibits interaction between cells and the extracellular matrix. This is Endomucin (Emcn) from Rattus norvegicus (Rat).